Reading from the N-terminus, the 493-residue chain is MIDFSLFYNSTDHFSIIPAVMLALFGCAILLFDFLIFPDPRQRKFLLIFVVLAEAFTGFGLFRQQAWLAAQNAPELSGFGGSVTVDGFAIFFNWIFLVAAVVVAIVSYKYLEISGEHHGEYYSLILFAQCGMYFLATGTDLITLFIGLELMALCFYVMVGFLRTERRSNEAALKYLLLGAFSSGFLVYGFSVMYGIAGSTKLSDIAAAIASRPPWDPMVFLALSTTSVGLLFKVSAVPFHMWAPDAYEGAPTTVTAYLSVASKAASIAFLLRIFLGPLASARAVWEPLLAFIAIITLTIGNLAAINQTNIKRLLAYSSISHAGYMLLGLVAGNDTGIKGIAVYVMVYTFMNLGAFLVIIAMRRASIIGEDLDDLAGLVHKSPGYAFLMLIFLLSLAGIPPTAGFLGKYYIFLALIQTGHTGLAIVATLYVAVAIYYYFKIVRSMFIREEMEKTPMLATSFGLRCALALTGIATLAIGIYPEPFLRLAQTSLFR.

14 helical membrane-spanning segments follow: residues 16–36, 45–65, 87–107, 119–139, 141–161, 176–196, 219–239, 258–278, 285–305, 313–333, 340–360, 385–405, 421–441, and 464–484; these read IIPA…DFLI, FLLI…FRQQ, GFAI…AIVS, GEYY…ATGT, LITL…MVGF, LLLG…MYGI, VFLA…AVPF, LSVA…LGPL, WEPL…LAAI, LLAY…VAGN, IAVY…VIIA, AFLM…AGFL, GLAI…FKIV, and CALA…EPFL.

This sequence belongs to the complex I subunit 2 family. As to quaternary structure, NDH-1 is composed of 14 different subunits. Subunits NuoA, H, J, K, L, M, N constitute the membrane sector of the complex.

The protein localises to the cell inner membrane. The enzyme catalyses a quinone + NADH + 5 H(+)(in) = a quinol + NAD(+) + 4 H(+)(out). Its function is as follows. NDH-1 shuttles electrons from NADH, via FMN and iron-sulfur (Fe-S) centers, to quinones in the respiratory chain. The immediate electron acceptor for the enzyme in this species is believed to be ubiquinone. Couples the redox reaction to proton translocation (for every two electrons transferred, four hydrogen ions are translocated across the cytoplasmic membrane), and thus conserves the redox energy in a proton gradient. The polypeptide is NADH-quinone oxidoreductase subunit N 2 (Solibacter usitatus (strain Ellin6076)).